The following is a 341-amino-acid chain: tRNA N6-adenosine threonylcarbamoyltransferase (341 aa).

Residues His117 and His121 each contribute to the Fe cation site. Substrate contacts are provided by residues 139 to 143 (VVSGG), Asp172, Gly185, Asp189, and Asn278. Asp307 provides a ligand contact to Fe cation.

The protein belongs to the KAE1 / TsaD family. Fe(2+) is required as a cofactor.

The protein resides in the cytoplasm. It catalyses the reaction L-threonylcarbamoyladenylate + adenosine(37) in tRNA = N(6)-L-threonylcarbamoyladenosine(37) in tRNA + AMP + H(+). Its function is as follows. Required for the formation of a threonylcarbamoyl group on adenosine at position 37 (t(6)A37) in tRNAs that read codons beginning with adenine. Is involved in the transfer of the threonylcarbamoyl moiety of threonylcarbamoyl-AMP (TC-AMP) to the N6 group of A37, together with TsaE and TsaB. TsaD likely plays a direct catalytic role in this reaction. The sequence is that of tRNA N6-adenosine threonylcarbamoyltransferase from Bacillus licheniformis (strain ATCC 14580 / DSM 13 / JCM 2505 / CCUG 7422 / NBRC 12200 / NCIMB 9375 / NCTC 10341 / NRRL NRS-1264 / Gibson 46).